Here is an 848-residue protein sequence, read N- to C-terminus: DNA-binding protein RFX6 (848 aa).

A DNA-binding region (RFX-type winged-helix) is located at residues 56–131; sequence TLQWLEDNYI…YHYYGIGIKE (76 aa).

The protein belongs to the RFX family. Expressed in progenitors and hormone expressing cells of the islet lineage.

The protein resides in the nucleus. In terms of biological role, transcription factor required to direct islet cell differentiation during endocrine pancreas development. This Danio rerio (Zebrafish) protein is DNA-binding protein RFX6 (rfx6).